The primary structure comprises 182 residues: UPF0316 protein BCAH820_3389 (182 aa).

3 consecutive transmembrane segments (helical) span residues 6-26 (LIFVLQIIYVPILTIRTILLV), 32-52 (SAAAVGLLEGAIYIVSLGIVF), and 58-78 (WMNIVAYVIGFSAGLLLGGYI).

The protein belongs to the UPF0316 family.

The protein localises to the cell membrane. In Bacillus cereus (strain AH820), this protein is UPF0316 protein BCAH820_3389.